We begin with the raw amino-acid sequence, 344 residues long: tRNA N6-adenosine threonylcarbamoyltransferase (344 aa).

Residues histidine 111 and histidine 115 each coordinate Fe cation. Substrate contacts are provided by residues 134–138 (LVSGG), aspartate 167, glycine 180, and asparagine 273. Residue aspartate 301 participates in Fe cation binding.

It belongs to the KAE1 / TsaD family. The cofactor is Fe(2+).

It localises to the cytoplasm. The catalysed reaction is L-threonylcarbamoyladenylate + adenosine(37) in tRNA = N(6)-L-threonylcarbamoyladenosine(37) in tRNA + AMP + H(+). Required for the formation of a threonylcarbamoyl group on adenosine at position 37 (t(6)A37) in tRNAs that read codons beginning with adenine. Is involved in the transfer of the threonylcarbamoyl moiety of threonylcarbamoyl-AMP (TC-AMP) to the N6 group of A37, together with TsaE and TsaB. TsaD likely plays a direct catalytic role in this reaction. In Cupriavidus pinatubonensis (strain JMP 134 / LMG 1197) (Cupriavidus necator (strain JMP 134)), this protein is tRNA N6-adenosine threonylcarbamoyltransferase.